We begin with the raw amino-acid sequence, 152 residues long: Ribosomal RNA large subunit methyltransferase H (152 aa).

S-adenosyl-L-methionine-binding positions include L68, G100, and 119-124 (FGPMTW).

It belongs to the RNA methyltransferase RlmH family. Homodimer.

The protein localises to the cytoplasm. It carries out the reaction pseudouridine(1915) in 23S rRNA + S-adenosyl-L-methionine = N(3)-methylpseudouridine(1915) in 23S rRNA + S-adenosyl-L-homocysteine + H(+). In terms of biological role, specifically methylates the pseudouridine at position 1915 (m3Psi1915) in 23S rRNA. The chain is Ribosomal RNA large subunit methyltransferase H from Rhodospirillum centenum (strain ATCC 51521 / SW).